The primary structure comprises 636 residues: MTTSALRRQVKNIVHNYSEAEIKVREATSNDPWGPPSSLMSEIADLTFNTVAFAEVMGMVWRRLNDSGKNWRHVYKALTLLDYLLKTGSERVAHQCRENLYTIQTLKDFQYIDRDGKDQGVNVREKVKQVMALLKDEERLRQERTHALKTKERMALEGMGIGSGQLGYSRRSRGSPSSYTSASSSPRYASDLEQARPQTSGEEELQLQLALAMSREEAERPVPPASHRDEDLQLQLALSLSRQEHEKGVRSWKGDDSPVANGAEPAGQRRQRDREPEREERKEEEKLKTSQSSILDLADIFAPAPALPSTHCSADPWDIPGLRPNTEPSGSSWGPSADPWSPVPSGNALSRSQPWDLLPTLSSSEPWGRTPVLPSGPPIADPWAPSSPTRKLPSTGADPWGASMETSDTSALGGASPFDPFAKPLESTEPKESRDSAQALPTGKSPSTVELDPFGDSSPSCKQNGMKEPEALDLGVLGEALPQQPGKEARPCRTPESFLGPSASSLVNLDSLVKAPLAARTRNPFLTGLGVPSPTNPFGAGDQGRPTLNQMRTGSPALGLPPGGPVGAPVGSMTYSASLPLPLSSVPVGATLPASVSVFPQAGAFAPPPASLPQPLLPTSGPMGPLPPQAGTNPFL.

A 1,2-diacyl-sn-glycero-3-phospho-(1D-myo-inositol-4,5-bisphosphate)-binding residues include R8, K11, R25, N30, R63, and H73. One can recognise an ENTH domain in the interval 12 to 144 (NIVHNYSEAE…KDEERLRQER (133 aa)). Residues 153-503 (RMALEGMGIG…TPESFLGPSA (351 aa)) form a disordered region. Residues 174-189 (GSPSSYTSASSSPRYA) are compositionally biased toward low complexity. A phosphoserine mark is found at S184 and S185. UIM domains lie at 202 to 221 (EEEL…AERP) and 229 to 248 (DEDL…HEKG). Composition is skewed to basic and acidic residues over residues 214–231 (SREE…RDED) and 242–256 (RQEH…KGDD). Residue S257 is modified to Phosphoserine. The segment covering 270–288 (RQRDREPEREERKEEEKLK) has biased composition (basic and acidic residues). A run of 5 repeats spans residues 315–317 (DPW), 338–340 (DPW), 365–367 (EPW), 381–383 (DPW), and 398–400 (DPW). Residues 315–400 (DPWDIPGLRP…KLPSTGADPW (86 aa)) are 5 X 3 AA repeats of [DE]-P-W. Over residues 426-435 (ESTEPKESRD) the composition is skewed to basic and acidic residues. 2 repeat units span residues 523-525 (NPF) and 536-538 (NPF). The segment at 523–635 (NPFLTGLGVP…LPPQAGTNPF (113 aa)) is 3 X 3 AA repeats of N-P-F. Over residues 607-616 (PPPASLPQPL) the composition is skewed to pro residues. The tract at residues 607–636 (PPPASLPQPLLPTSGPMGPLPPQAGTNPFL) is disordered. The stretch at 633 to 635 (NPF) is repeat 3.

This sequence belongs to the epsin family.

It localises to the cytoplasm. The protein localises to the cell cortex. The protein resides in the perinuclear region. It is found in the cytoplasmic vesicle. Its subcellular location is the clathrin-coated vesicle. The polypeptide is Epsin-3 (Epn3) (Mus musculus (Mouse)).